The primary structure comprises 233 residues: Gamma-glutamyl-hercynylcysteine sulfoxide hydrolase (233 aa).

The Nucleophile role is filled by C2. The Glutamine amidotransferase type-2 domain maps to 2 to 233 (CRHLGWLGAQ…TALDRAKGPR (232 aa)).

It catalyses the reaction gamma-L-glutamyl-hercynylcysteine S-oxide + H2O = S-(hercyn-2-yl)-L-cysteine S-oxide + L-glutamate. It participates in amino-acid biosynthesis; ergothioneine biosynthesis. In terms of biological role, catalyzes the hydrolysis of the gamma-glutamyl amide bond of hercynyl-gamma-L-glutamyl-L-cysteine sulfoxide to produce hercynylcysteine sulfoxide, a step in the biosynthesis pathway of ergothioneine. ERG is one of the major redox buffers which protects bacteria against redox stressors and antibiotics; loss of ERG or mycothiol (MSH, the other major redox buffer in this bacteria) leads to respiratory alterations and bioenergetic deficiencies that negatively impact virulence. The sequence is that of Gamma-glutamyl-hercynylcysteine sulfoxide hydrolase from Mycobacterium tuberculosis (strain CDC 1551 / Oshkosh).